A 55-amino-acid chain; its full sequence is Ribosome modulation factor (55 aa).

The protein belongs to the ribosome modulation factor family. Associates exclusively with 100S ribosomes.

The protein localises to the cytoplasm. During stationary phase, converts 70S ribosomes to an inactive dimeric form (100S ribosomes). May form immature 90S particles, which are converted to mature 100S ribosomes by the hibernation promoting factor Hpf. The sequence is that of Ribosome modulation factor from Escherichia coli O157:H7.